The following is a 401-amino-acid chain: Acetate kinase (401 aa).

Asparagine 7 is a binding site for Mg(2+). Lysine 14 contacts ATP. Residue arginine 96 participates in substrate binding. The active-site Proton donor/acceptor is aspartate 153. Residues 212–216, 287–289, and 335–339 each bind ATP; these read HLGNG, DMR, and GIGEN. A Mg(2+)-binding site is contributed by glutamate 388.

This sequence belongs to the acetokinase family. Homodimer. Requires Mg(2+) as cofactor. The cofactor is Mn(2+).

It is found in the cytoplasm. It carries out the reaction acetate + ATP = acetyl phosphate + ADP. It participates in metabolic intermediate biosynthesis; acetyl-CoA biosynthesis; acetyl-CoA from acetate: step 1/2. Catalyzes the formation of acetyl phosphate from acetate and ATP. Can also catalyze the reverse reaction. This chain is Acetate kinase, found in Microcystis aeruginosa (strain NIES-843 / IAM M-2473).